Consider the following 1886-residue polypeptide: Highly reducing polyketide synthase (1886 aa).

One can recognise a Ketosynthase family 3 (KS3) domain in the interval 11–434 (TQDVAIVGLS…GANAHAVLDD (424 aa)). Catalysis depends on for beta-ketoacyl synthase activity residues Cys182, His317, and His357. Residues 483–568 (FLFSGQDQQS…VNNDLANTKK (86 aa)) form a malonyl-CoA:ACP transacylase (MAT) domain region. Residues 616–750 (RSLIGAPQPS…GLLSIEYESS (135 aa)) form an N-terminal hotdog fold region. A PKS/mFAS DH domain is found at 616 to 926 (RSLIGAPQPS…CTAISEATNP (311 aa)). A dehydratase (DH) domain region spans residues 618 to 924 (LIGAPQPSYG…LHCTAISEAT (307 aa)). The active-site Proton acceptor; for dehydratase activity is His648. The tract at residues 778–926 (HTTQSPKALY…CTAISEATNP (149 aa)) is C-terminal hotdog fold. Asp838 (proton donor; for dehydratase activity) is an active-site residue. The segment at 1169-1480 (GMLDEIYFEA…AGKHMGKVAL (312 aa)) is enoylreductase (ER) domain. A catalytic ketoreductase (KRc) domain region spans residues 1503-1681 (ATYVLVGGFG…VSLDLGLMRD (179 aa)). One can recognise a Carrier domain in the interval 1802-1879 (DVTDLVLEIL…DLVDKIVAKS (78 aa)). Position 1839 is an O-(pantetheine 4'-phosphoryl)serine (Ser1839).

It participates in mycotoxin biosynthesis. Highly reducing polyketide synthase; part of the gene cluster that mediates the biosynthesis of the selective antifungal agent ascochitine, an o-quinone methide that plays a possible protective role against other microbial competitors in nature and is considered to be important for pathogenicity of legume-associated Didymella species. The pathway probably begins with the synthesis of a keto-aldehyde intermediate by the ascochitine non-reducing polyketide synthase pksAC from successive condensations of 4 malonyl-CoA units, presumably with a simple acetyl-CoA starter unit. Release of the keto-aldehyde intermediate is consistent with the presence of the C-terminal reductive release domain. The HR-PKS (orf7) probably makes a diketide starter unit which is passed to the non-reducing polyketide synthase pksAC for further extension, producing ascochital and ascochitine. The aldehyde dehydrogenase (orf1), the 2-oxoglutarate-dependent dioxygenase (orf3) and the dehydrogenase (orf9) are probably involved in subsequent oxidations of methyl groups to the carboxylic acid of the heterocyclic ring. The ascochitine gene cluster also includes a gene encoding a short peptide with a cupin domain (orf2) that is often found in secondary metabolite gene clusters and which function has still to be determined. This chain is Highly reducing polyketide synthase, found in Didymella fabae (Leaf and pod spot disease fungus).